We begin with the raw amino-acid sequence, 358 residues long: Gap junction alpha-5 protein (358 aa).

Over 1–19 (MGDWSFLGEFLEEVHKHST) the chain is Cytoplasmic. A helical membrane pass occupies residues 20-40 (VIGKVWLTVLFIFRMLVLGTA). Over 41-76 (AESSWGDEQADFRCDTIQPGCQNVCYDQAFPISHIR) the chain is Extracellular. The chain crosses the membrane as a helical span at residues 77 to 97 (YWVLQIIFVSTPSLVYMGHAM). Residues 98 to 164 (HTVRMQEKQK…CTILIRTTME (67 aa)) are Cytoplasmic-facing. Residues 165–185 (VAFIVGQYLLYGIFLDTLHVC) traverse the membrane as a helical segment. Residues 186 to 205 (RRSPCPHPVNCYVSRPTEKN) are Extracellular-facing. A helical membrane pass occupies residues 206–226 (VFIVFMMAVAGLSLFLSLAEL). Topologically, residues 227–358 (YHLGWKKIRQ…SKARSDDLSV (132 aa)) are cytoplasmic. 2 disordered regions span residues 242 to 262 (RQGVDKHQLPGPPTSLVQSLT) and 318 to 358 (SQKP…DLSV). A phosphoserine mark is found at serine 353 and serine 357.

It belongs to the connexin family. Alpha-type (group II) subfamily. As to quaternary structure, a connexon is composed of a hexamer of connexins. Abundantly expressed in the lung, also expressed in the kidney and heart.

It is found in the cell membrane. Its subcellular location is the cell junction. The protein localises to the gap junction. One gap junction consists of a cluster of closely packed pairs of transmembrane channels, the connexons, through which materials of low MW diffuse from one cell to a neighboring cell. The protein is Gap junction alpha-5 protein (Gja5) of Mus musculus (Mouse).